Consider the following 688-residue polypeptide: Methionine--tRNA ligase (688 aa).

The 'HIGH' region signature appears at 13–23 (PYANGNFHIGH). Residues C144, C147, C157, and C160 each contribute to the Zn(2+) site. Positions 342–346 (KMSKS) match the 'KMSKS' region motif. K345 is an ATP binding site. Positions 582–688 (DFAKVDLRIA…PGAQPGMRIH (107 aa)) constitute a tRNA-binding domain.

This sequence belongs to the class-I aminoacyl-tRNA synthetase family. MetG type 1 subfamily. Homodimer. Zn(2+) is required as a cofactor.

It is found in the cytoplasm. The catalysed reaction is tRNA(Met) + L-methionine + ATP = L-methionyl-tRNA(Met) + AMP + diphosphate. Functionally, is required not only for elongation of protein synthesis but also for the initiation of all mRNA translation through initiator tRNA(fMet) aminoacylation. In Acidovorax sp. (strain JS42), this protein is Methionine--tRNA ligase.